The following is a 409-amino-acid chain: MDPIEFIQKSASSIASTMHKLKLKYNPFSEKPIRGNTKFFVGRVSELREIGEILGSALHGSVANAAIVGTKGIGKSSMLNIIYYATKKQGHWVVEMTASQVTPRQFLIQLLYNILTENIITMSGTIKSDYMEHSSRILDMYRKLNNYGDKVPIHYPRERIERDLEYLINEVKSPDKLCIILIDEADQFAKKSCLSLLQFFHSFLYEEGILTFMAGSPTLMDDLTKISPPIKDRIPKIINMPPLSKDESYDLIRRRLEDAHIDGAEEFEPFTEEAIHKIVEECDGIPRKIIMTCSESISIAIRKGLTKIDEKVVKEAMHSLGISVGHQILNHLTPAQSEIVRAMAELGGSATVTQLAEYLKKSPSTIGTHLSDIYEMGYIYKEREGNNVYYKLSKELRDVLIGEDDELEM.

In terms of domain architecture, HTH arsR-type spans 305–409 (LTKIDEKVVK…LIGEDDELEM (105 aa)).

This is an uncharacterized protein from Methanocaldococcus jannaschii (strain ATCC 43067 / DSM 2661 / JAL-1 / JCM 10045 / NBRC 100440) (Methanococcus jannaschii).